A 477-amino-acid chain; its full sequence is tRNA-2-methylthio-N(6)-dimethylallyladenosine synthase (477 aa).

The region spanning 3–120 (KKLYIKTWGC…LPEMINELKG (118 aa)) is the MTTase N-terminal domain. [4Fe-4S] cluster contacts are provided by cysteine 12, cysteine 49, cysteine 83, cysteine 157, cysteine 161, and cysteine 164. A Radical SAM core domain is found at 143 to 375 (RAEGPTAFVS…QQRITQQALR (233 aa)). A TRAM domain is found at 378–441 (RHMVGTEQRI…TNSLRGEVVR (64 aa)).

It belongs to the methylthiotransferase family. MiaB subfamily. In terms of assembly, monomer. It depends on [4Fe-4S] cluster as a cofactor.

It localises to the cytoplasm. It catalyses the reaction N(6)-dimethylallyladenosine(37) in tRNA + (sulfur carrier)-SH + AH2 + 2 S-adenosyl-L-methionine = 2-methylsulfanyl-N(6)-dimethylallyladenosine(37) in tRNA + (sulfur carrier)-H + 5'-deoxyadenosine + L-methionine + A + S-adenosyl-L-homocysteine + 2 H(+). Its function is as follows. Catalyzes the methylthiolation of N6-(dimethylallyl)adenosine (i(6)A), leading to the formation of 2-methylthio-N6-(dimethylallyl)adenosine (ms(2)i(6)A) at position 37 in tRNAs that read codons beginning with uridine. The sequence is that of tRNA-2-methylthio-N(6)-dimethylallyladenosine synthase from Alteromonas mediterranea (strain DSM 17117 / CIP 110805 / LMG 28347 / Deep ecotype).